A 471-amino-acid polypeptide reads, in one-letter code: A-type ATP synthase subunit B (471 aa).

This sequence belongs to the ATPase alpha/beta chains family. Has multiple subunits with at least A(3), B(3), C, D, E, F, H, I and proteolipid K(x).

The protein resides in the cell membrane. Functionally, component of the A-type ATP synthase that produces ATP from ADP in the presence of a proton gradient across the membrane. The B chain is a regulatory subunit. This is A-type ATP synthase subunit B from Halobacterium salinarum (strain ATCC 29341 / DSM 671 / R1).